Consider the following 394-residue polypeptide: Elongation factor Tu (394 aa).

The 195-residue stretch at 10–204 (KPHVNVGTIG…ALDSYIPEPE (195 aa)) folds into the tr-type G domain. The interval 19-26 (GHVDHGKT) is G1. Position 19-26 (19-26 (GHVDHGKT)) interacts with GTP. Thr-26 lines the Mg(2+) pocket. The tract at residues 60–64 (GITIA) is G2. The G3 stretch occupies residues 81–84 (DCPG). GTP is bound by residues 81–85 (DCPGH) and 136–139 (NKCD). Residues 136-139 (NKCD) form a G4 region. A G5 region spans residues 174–176 (SAL).

Belongs to the TRAFAC class translation factor GTPase superfamily. Classic translation factor GTPase family. EF-Tu/EF-1A subfamily. In terms of assembly, monomer.

It is found in the cytoplasm. The catalysed reaction is GTP + H2O = GDP + phosphate + H(+). GTP hydrolase that promotes the GTP-dependent binding of aminoacyl-tRNA to the A-site of ribosomes during protein biosynthesis. This chain is Elongation factor Tu, found in Vibrio campbellii (strain ATCC BAA-1116).